Here is a 3023-residue protein sequence, read N- to C-terminus: Genome polyprotein (3023 aa).

Basic residues predominate over residues 1–21 (MSTLPKPKRQTKRNTLRRPKN). At Ser2 the chain carries N-acetylserine; by host. The interaction with STAT1 stretch occupies residues 2–23 (STLPKPKRQTKRNTLRRPKNVK). Positions 2 to 58 (STLPKPKRQTKRNTLRRPKNVKFPAGGQIVGEVYVLPRRGPQLGVREVRKTSERSQP) are interaction with EIF2AK2/PKR. The interaction with DDX3X stretch occupies residues 2–59 (STLPKPKRQTKRNTLRRPKNVKFPAGGQIVGEVYVLPRRGPQLGVREVRKTSERSQPR). Positions 2-75 (STLPKPKRQT…PKARPREGRS (74 aa)) are disordered. The Cytoplasmic portion of the chain corresponds to 2–168 (STLPKPKRQT…EDGVNYATGN (167 aa)). 2 consecutive short sequence motifs (nuclear localization signal) follow at residues 5 to 13 (PKPKRQTKR) and 38 to 43 (PRRGPQ). Positions 47-57 (REVRKTSERSQ) are enriched in basic and acidic residues. Ser53 is modified (phosphoserine; by host). 2 short sequence motifs (nuclear localization signal) span residues 58-64 (PRGRRQP) and 66-71 (PKARPR). The tract at residues 112-152 (PRRRSRNLGKVIDTLTCGFADLMGYIPLIGAPVGGVARALA) is important for endoplasmic reticulum and mitochondrial localization. Ser116 carries the post-translational modification Phosphoserine; by host. Residues 122–173 (VIDTLTCGFADLMGYIPLIGAPVGGVARALAHGVRALEDGVNYATGNLPGCS) are interaction with APOA2. The important for lipid droplets localization stretch occupies residues 164–167 (YATG). Residues 169-189 (LPGCSFSIFLLALFSCLTCPA) form a helical membrane-spanning segment. Residues 178-191 (LLALFSCLTCPASS) constitute a propeptide, ER anchor for the core protein, removed in mature form by host signal peptidase. Over 190–359 (SSLEYRNASG…VGAHWGVMAG (170 aa)) the chain is Lumenal. 3 N-linked (GlcNAc...) asparagine; by host glycosylation sites follow: Asn196, Asn209, and Asn235. The important for fusion stretch occupies residues 266–297 (LVAPPTLCSALYVEDAFGAVSLVGQAFTFRPR). A glycan (N-linked (GlcNAc...) asparagine; by host) is linked at Asn306. Residues 360 to 380 (LAYFSMQGNWAKVVIVLIMFS) form a helical membrane-spanning segment. Over 381 to 733 (GVDATTHTTG…WEFVVLVFLL (353 aa)) the chain is Lumenal. The interval 386 to 413 (THTTGGSAAQATAGFTSFFTRGPSQNLQ) is HVR1. Residues Asn418, Asn424, and Asn431 are each glycosylated (N-linked (GlcNAc...) (high mannose) asparagine; by host). 4 cysteine pairs are disulfide-bonded: Cys430/Cys554, Cys453/Cys460, Cys488/Cys496, and Cys505/Cys510. An N-linked (GlcNAc...) asparagine; by host glycan is attached at Asn449. The segment at 476–480 (ANING) is HVR2. An N-linked (GlcNAc...) asparagine; by host glycan is attached at Asn477. A CD81-binding 1 region spans residues 482 to 495 (SEDRPYCWHYPPRP). Asn534 is a glycosylation site (N-linked (GlcNAc...) asparagine; by host). The segment at 546 to 553 (PPQGRWFG) is CD81-binding 2. An N-linked (GlcNAc...) asparagine; by host glycan is attached at Asn558. 4 disulfides stabilise this stretch: Cys566/Cys571, Cys589/Cys593, Cys605/Cys628, and Cys615/Cys652. N-linked (GlcNAc...) (high mannose) asparagine; by host glycosylation is found at Asn631 and Asn653. Cys660 and Cys685 are disulfide-bonded. Residues 668-679 (SEQQPLLHSTTD) are PKR/eIF2-alpha phosphorylation homology domain (PePHD). A helical membrane pass occupies residues 734 to 754 (LADARVCVALWMMLLISQAEA). The Lumenal segment spans residues 755–765 (AMENLVMLNAL). A helical membrane pass occupies residues 766 to 786 (SAAGQQGYVWYLVAFCAAWHI). At 787–790 (RGKL) the chain is on the cytoplasmic side. A helical transmembrane segment spans residues 791–811 (VPLITYGLTGLWPLALLDLLL). Residues 812-821 (PQRAYAWTGE) lie on the Lumenal side of the membrane. Residues 822–842 (DDATIGAGVLLLLGFFTLSPW) form a helical membrane-spanning segment. The Cytoplasmic portion of the chain corresponds to 843–889 (YKHWIGRLIWWNQYAICRGEAALQVWVPPLLVRGSRDSVILLASLLY). A helical membrane pass occupies residues 890–910 (PSLIFDITKLLIAVLGPLYLI). In terms of domain architecture, Peptidase C18 spans 907 to 1034 (LYLIQAALTS…DYKKMGWRLL (128 aa)). Topologically, residues 911 to 936 (QAALTSTPYFVRAHVLIRICMLVRSA) are lumenal. The interval 912 to 1214 (AALTSTPYFV…PVETLSTQVR (303 aa)) is protease NS2-3. Cys930 carries S-palmitoyl cysteine; by host lipidation. A helical membrane pass occupies residues 937–957 (MGGKYVQMAVLTVGRWFNTYL). Residues 937–957 (MGGKYVQMAVLTVGRWFNTYL) are interaction with host SCPS1. The Cytoplasmic portion of the chain corresponds to 958-1665 (YDHLSPIQDW…CMSADLEVTT (708 aa)). Active-site for protease NS2 activity; shared with dimeric partner residues include His960, Glu980, and Cys1001. Residues 1035–1216 (SPISAYAQQT…ETLSTQVRSP (182 aa)) enclose the Peptidase S29 domain. Catalysis depends on charge relay system; for serine protease NS3 activity residues His1091 and Asp1115. The Zn(2+) site is built by Cys1131 and Cys1133. The active-site Charge relay system; for serine protease NS3 activity is the Ser1173. Zn(2+)-binding residues include Cys1179 and His1183. The region spanning 1225-1377 (PAVPESYQVG…PNIEEVGLTS (153 aa)) is the Helicase ATP-binding domain. 1238 to 1245 (APTGSGKS) provides a ligand contact to ATP. Mg(2+)-binding residues include Ser1245 and Glu1325. Positions 1324–1327 (DECH) match the DECH box motif. The Helicase C-terminal domain maps to 1387 to 1546 (ALPLAMIKGG…DLQPAETTVR (160 aa)). An RNA-binding region spans residues 1494–1506 (QRRGRTGRGRPGI). The chain crosses the membrane as a helical span at residues 1666–1686 (SAWVLVGGVLAALAAYCLSVG). The segment at 1687-1698 (CVVIVGHIELGG) is NS3-binding. At 1687 to 1813 (CVVIVGHIEL…SVTSPLTTNQ (127 aa)) the chain is on the cytoplasmic side. Residues 1814–1834 (TMFFNILGGWVATHLAGPAAS) form a helical membrane-spanning segment. Residues 1835–1836 (SA) are Lumenal-facing. Residues 1837–1857 (FVVSGLAGAAVGGIGIGRVLL) traverse the membrane as a helical segment. Position 1858 (Asp1858) is a topological domain, cytoplasmic. Residues 1859-1879 (VLAGYGAGVSGALVAFKIMGG) traverse the membrane as a helical segment. The Lumenal segment spans residues 1880 to 1889 (ELPTTEDMVN). The chain crosses the membrane as a helical span at residues 1890–1910 (LLPAILSPGALVVGVICAAVL). The Cytoplasmic portion of the chain corresponds to 1911-1980 (RRHVGPGEGA…WINEDYPSPC (70 aa)). Cys1980 carries the S-palmitoyl cysteine; by host lipid modification. Residues 1981-2010 (NGDWLHDIWDWVCIVLSDFKTWLSAKIMPK) lie within the membrane without spanning it. Residues 2011 to 3002 (VPGIPFLSCQ…YHSVSRARTR (992 aa)) are Cytoplasmic-facing. Zn(2+) contacts are provided by Cys2019, Cys2037, Cys2039, and Cys2060. The interval 2128–2216 (EFFTELDGVR…ASSSASQLSA (89 aa)) is FKBP8-binding. The segment at 2128 to 2340 (EFFTELDGVR…PVPPPRRKRT (213 aa)) is transcriptional activation. The interval 2143–2147 (PPCKP) is interaction with non-structural protein 4A. A compositionally biased stretch (low complexity) spans 2195-2218 (ARRLARGSPPSEASSSASQLSAPS). A disordered region spans residues 2195–2226 (ARRLARGSPPSEASSSASQLSAPSLKATCQTH). The interval 2197 to 2450 (RLARGSPPSE…AIITPCSAEE (254 aa)) is interaction with host SKP2. 6 positions are modified to phosphoserine; by host: Ser2202, Ser2205, Ser2209, Ser2212, Ser2215, and Ser2218. The ISDR stretch occupies residues 2218-2257 (SLKATCQTHRPHPDAELIDANLLWRQEMGSNITRVESETK). An interaction with EIF2AK2/PKR region spans residues 2218–2283 (SLKATCQTHR…TELSIPAECF (66 aa)). The tract at residues 2257 to 2314 (KVVILDSFEPLRAEEDDTELSIPAECFKKPPKYPPALPIWARPDYNPPLLPSWKDPTY) is NS4B-binding. Residues 2307–2385 (PSWKDPTYEP…GTESTAESGD (79 aa)) are V3. Disordered regions lie at residues 2320–2344 (HGCA…IKLD) and 2357–2422 (ERSF…STVS). The short motif at 2330–2333 (APVP) is the SH3-binding element. A Nuclear localization signal motif is present at residues 2335–2343 (PRRKRTIKL). The segment covering 2366–2384 (EGTGTSSSGVGTESTAESG) has biased composition (low complexity). Ser2461 and Ser2474 each carry phosphoserine; by host. Residues 2646–2764 (PLGFSYDTRC…ISESCGVEED (119 aa)) form the RdRp catalytic domain. Positions 2652, 2750, and 2751 each coordinate Mg(2+). A helical transmembrane segment spans residues 3003–3023 (HLLLCLLLLTVGVGIFLLPAR).

The protein belongs to the hepacivirus polyprotein family. In terms of assembly, homooligomer. Interacts with E1 (via C-terminus). Interacts with the non-structural protein 5A. Interacts (via N-terminus) with host STAT1 (via SH2 domain); this interaction results in decreased STAT1 phosphorylation and ubiquitin-mediated proteasome-dependent STAT1 degradation, leading to decreased IFN-stimulated gene transcription. Interacts with host STAT3; this interaction constitutively activates STAT3. Interacts with host LTBR receptor. Interacts with host TNFRSF1A receptor and possibly induces apoptosis. Interacts with host HNRPK. Interacts with host YWHAE. Interacts with host UBE3A/E6AP. Interacts with host DDX3X. Interacts with host APOA2. Interacts with host RXRA protein. Interacts with host SP110 isoform 3/Sp110b; this interaction sequesters the transcriptional corepressor SP110 away from the nucleus. Interacts with host CREB3 nuclear transcription protein; this interaction triggers cell transformation. Interacts with host ACY3. Interacts with host C1QR1. Interacts with host RBM24; this interaction, which enhances the interaction of the mature core protein with 5'-UTR, may inhibit viral translation and favor replication. Interacts with host EIF2AK2/PKR; this interaction induces the autophosphorylation of EIF2AK2. Part of the viral assembly initiation complex composed of NS2, E1, E2, NS3, NS4A, NS5A and the mature core protein. As to quaternary structure, forms a heterodimer with envelope glycoprotein E2. Interacts with mature core protein. Interacts with protease NS2. The heterodimer E1/E2 interacts with host CLDN1; this interaction plays a role in viral entry into host cell. Interacts with host SPSB2 (via C-terminus). Part of the viral assembly initiation complex composed of NS2, E1, E2, NS3, NS4A, NS5A and the mature core protein. Interacts with host NEURL3; this interaction prevents E1 binding to glycoprotein E2. Forms a heterodimer with envelope glycoprotein E1. Interacts with host CD81 and SCARB1 receptors; these interactions play a role in viral entry into host cell. Interacts with host EIF2AK2/PKR; this interaction inhibits EIF2AK2 and probably allows the virus to evade the innate immune response. Interacts with host CD209/DC-SIGN and CLEC4M/DC-SIGNR. Interact with host SPCS1; this interaction is essential for viral particle assembly. Interacts with protease NS2. The heterodimer E1/E2 interacts with host CLDN1; this interaction plays a role in viral entry into host cell. Part of the viral assembly initiation complex composed of NS2, E1, E2, NS3, NS4A, NS5A and the mature core protein. Interacts with host SLC3A2/4F2hc; the interaction may facilitate viral entry into host cell. Interacts with human PLSCR1. In terms of assembly, homohexamer. Homoheptamer. Interacts with protease NS2. As to quaternary structure, homodimer. Interacts with host SPCS1; this interaction is essential for viral particle assembly. Interacts with envelope glycoprotein E1. Interacts with envelope glycoprotein E2. Interacts with viroporin p7. Interacts with serine protease/helicase NS3. Part of the replication complex composed of NS2, NS3, NS4A, NS4B, NS5A and the RNA-directed RNA polymerase embedded in an ER-derived membranous web. Part of the viral assembly initiation complex composed of NS2, E1, E2, NS3, NS4A, NS5A and the mature core protein. Interacts with protease NS2. Interacts with non-structural protein 4A; this interaction stabilizes the folding of NS3 serine protease. NS3-NS4A interaction is essential for NS3 activation and allows membrane anchorage of the latter. NS3/NS4A complex also prevents phosphorylation of host IRF3, thus preventing the establishment of dsRNA induced antiviral state. Interacts with host MAVS; this interaction leads to the cleavage and inhibition of host MAVS. Interacts with host TICAM1; this interaction leads to the cleavage and inhibition of host TICAM1. Interacts with host TANK-binding kinase/TBK1; this interaction results in the inhibition of the association between TBK1 and IRF3, which leads to the inhibition of IRF3 activation. Interacts with host RBM24. Part of the replication complex composed of NS2, NS3, NS4A, NS4B, NS5A and the RNA-directed RNA polymerase embedded in an ER-derived membranous web. Part of the viral assembly initiation complex composed of NS2, E1, E2, NS3, NS4A, NS5A and the mature core protein. In terms of assembly, interacts with NS3 serine protease; this interaction stabilizes the folding of NS3 serine protease. NS3-NS4A interaction is essential for NS3 activation and allows membrane anchorage of the latter. Interacts with non-structural protein 5A (via N-terminus). Part of the replication complex composed of NS2, NS3, NS4A, NS4B, NS5A and the RNA-directed RNA polymerase embedded in an ER-derived membranous web. Part of the viral assembly initiation complex composed of NS2, E1, E2, NS3, NS4A, NS5A and the mature core protein. As to quaternary structure, homomultimer. Interacts with non-structural protein NS5A. Interacts with host PLA2G4C; this interaction likely initiates the recruitment of replication complexes to lipid droplets. Interacts with host STING; this interaction disrupts the interaction between STING and TBK1 thereby suppressing the interferon signaling. Part of the replication complex composed of NS2, NS3, NS4A, NS4B, NS5A and the RNA-directed RNA polymerase embedded in an ER-derived membranous web. Monomer. Homodimer; dimerization is required for RNA-binding. Interacts with the mature core protein. Interacts (via N-terminus) with non-structural protein 4A. Interacts with non-structural protein 4B. Interacts (via region D2) with RNA-directed RNA polymerase. Part of the viral assembly initiation complex composed of NS2, E1, E2, NS3, NS4A, NS5A and the mature core protein. Part of the replication complex composed of NS2, NS3, NS4A, NS4B, NS5A and the RNA-directed RNA polymerase embedded in an ER-derived membranous web. Interacts with host GRB2. Interacts with host BIN1. Interacts with host PIK3R1. Interacts with host SRCAP. Interacts with host FKBP8. Interacts (via C-terminus) with host VAPB (via MSP domain). Interacts with host EIF2AK2/PKR; this interaction leads to disruption of EIF2AK2 dimerization by NS5A and probably allows the virus to evade the innate immune response. Interacts (via N-terminus) with host PACSIN2 (via N-terminus); this interaction attenuates protein kinase C alpha-mediated phosphorylation of PACSIN2 by disrupting the interaction between PACSIN2 and PRKCA. Interacts (via N-terminus) with host SRC kinase (via SH2 domain). Interacts with most Src-family kinases. Interacts with host IFI27 and SKP2; promotes the ubiquitin-mediated proteasomal degradation of NS5A. Interacts with host GPS2. Interacts with host TNFRSF21; this interaction allows the modulation by the virus of JNK, p38 MAPK, STAT3, and Akt signaling pathways in a DR6-dependent manner. Interacts (via N-terminus) with host CIDEB (via N-terminus); this interaction seems to regulate the association of HCV particles with APOE. Interacts with host CHKA/Choline Kinase-alpha; CHKA bridges host PI4KA and NS5A and potentiates NS5A-stimulated PI4KA activity, which then facilitates the targeting of the ternary complex to the ER for viral replication. Interacts with host SPSB2 (via C-terminus); this interaction targets NS5A for ubiquitination and degradation. Interacts with host RAB18; this interaction may promote the association of NS5A and other replicase components with lipid droplets. Interacts (via region D2) with host PPIA/CYPA; the interaction stimulates RNA-binding ability of NS5A and is dependent on the peptidyl-prolyl cis-trans isomerase activity of PPIA/CYPA. Interacts with host TRIM14; this interaction induces the degradation of NS5A. In terms of assembly, homooligomer. Interacts with non-structural protein 5A. Interacts with host VAPB. Interacts with host PRK2/PKN2. Interacts with host HNRNPA1 and SEPT6; these interactions facilitate viral replication. Part of the replication complex composed of NS2, NS3, NS4A, NS4B, NS5A and the RNA-directed RNA polymerase. Requires Zn(2+) as cofactor. Mg(2+) is required as a cofactor. In terms of processing, specific enzymatic cleavages in vivo yield mature proteins. The structural proteins, core, E1, E2 and p7 are produced by proteolytic processing by host signal peptidases. The core protein precursor is synthesized as a 23 kDa, which is retained in the ER membrane through the hydrophobic signal peptide. Cleavage by the signal peptidase releases the 21 kDa mature core protein. The cleavage of the core protein precursor occurs between aminoacids 176 and 188 but the exact cleavage site is not known. Some degraded forms of the core protein appear as well during the course of infection. The other proteins (p7, NS2, NS3, NS4A, NS4B, NS5A and NS5B) are cleaved by the viral proteases. Autoprocessing between NS2 and NS3 is mediated by the NS2 cysteine protease catalytic domain and regulated by the NS3 N-terminal domain. Phosphorylated by host PKC and PKA. Post-translationally, ubiquitinated; mediated by UBE3A and leading to core protein subsequent proteasomal degradation. In terms of processing, highly N-glycosylated. Palmitoylation is required for NS2/3 autoprocessing and E2 recruitment to membranes. Post-translationally, palmitoylated. This modification may play a role in its polymerization or in protein-protein interactions. In terms of processing, phosphorylated on serines in a basal form termed p56. p58 is a hyperphosphorylated form of p56. p56 and p58 coexist in the cell in roughly equivalent amounts. Hyperphosphorylation is dependent on the presence of NS4A. Host CSNK1A1/CKI-alpha or RPS6KB1 kinases may be responsible for NS5A phosphorylation. Tyrosine phosphorylation is essential for the interaction with host SRC. Post-translationally, the N-terminus is phosphorylated by host PRK2/PKN2.

The protein resides in the host endoplasmic reticulum membrane. It localises to the host mitochondrion membrane. The protein localises to the virion. It is found in the host cytoplasm. Its subcellular location is the host nucleus. The protein resides in the host lipid droplet. It localises to the virion membrane. The protein localises to the host mitochondrion. It is found in the host cell membrane. Its subcellular location is the host perinuclear region. It catalyses the reaction Hydrolysis of four peptide bonds in the viral precursor polyprotein, commonly with Asp or Glu in the P6 position, Cys or Thr in P1 and Ser or Ala in P1'.. The enzyme catalyses a ribonucleoside 5'-triphosphate + H2O = a ribonucleoside 5'-diphosphate + phosphate + H(+). The catalysed reaction is ATP + H2O = ADP + phosphate + H(+). It carries out the reaction RNA(n) + a ribonucleoside 5'-triphosphate = RNA(n+1) + diphosphate. With respect to regulation, inhibited by the antiviral drug hexamethylene amiloride. Inhibition by amantadine appears to be genotype-dependent. Also inhibited by long-alkyl-chain iminosugar derivatives. Activity is up-regulated by PRK2/PKN2-mediated phosphorylation. Functionally, packages viral RNA to form a viral nucleocapsid, and promotes virion budding. Participates in the viral particle production as a result of its interaction with the non-structural protein 5A. Binds RNA and may function as a RNA chaperone to induce the RNA structural rearrangements taking place during virus replication. Modulates viral translation initiation by interacting with viral IRES and 40S ribosomal subunit. Affects various cell signaling pathways, host immunity and lipid metabolism. Prevents the establishment of cellular antiviral state by blocking the interferon-alpha/beta (IFN-alpha/beta) and IFN-gamma signaling pathways and by blocking the formation of phosphorylated STAT1 and promoting ubiquitin-mediated proteasome-dependent degradation of STAT1. Activates STAT3 leading to cellular transformation. Regulates the activity of cellular genes, including c-myc and c-fos. May repress the promoter of p53, and sequester CREB3 and SP110 isoform 3/Sp110b in the cytoplasm. Represses cell cycle negative regulating factor CDKN1A, thereby interrupting an important check point of normal cell cycle regulation. Targets transcription factors involved in the regulation of inflammatory responses and in the immune response: suppresses TNF-induced NF-kappa-B activation, and activates AP-1. Binds to dendritic cells (DCs) via C1QR1, resulting in down-regulation of T-lymphocytes proliferation. Alters lipid metabolism by interacting with hepatocellular proteins involved in lipid accumulation and storage. Induces up-regulation of FAS promoter activity, and thereby contributes to the increased triglyceride accumulation in hepatocytes (steatosis). In terms of biological role, forms a heterodimer with envelope glycoprotein E2, which mediates virus attachment to the host cell, virion internalization through clathrin-dependent endocytosis and fusion with host membrane. Fusion with the host cell is most likely mediated by both E1 and E2, through conformational rearrangements of the heterodimer required for fusion rather than a classical class II fusion mechanism. E1/E2 heterodimer binds host apolipoproteins such as APOB and ApoE thereby forming a lipo-viro-particle (LVP). APOE associated to the LVP allows the initial virus attachment to cell surface receptors such as the heparan sulfate proteoglycans (HSPGs), syndecan-1 (SDC1), syndecan-1 (SDC2), the low-density lipoprotein receptor (LDLR) and scavenger receptor class B type I (SCARB1). The cholesterol transfer activity of SCARB1 allows E2 exposure and binding of E2 to SCARB1 and the tetraspanin CD81. E1/E2 heterodimer binding on CD81 activates the epithelial growth factor receptor (EGFR) signaling pathway. Diffusion of the complex E1-E2-EGFR-SCARB1-CD81 to the cell lateral membrane allows further interaction with Claudin 1 (CLDN1) and occludin (OCLN) to finally trigger HCV entry. Forms a heterodimer with envelope glycoprotein E1, which mediates virus attachment to the host cell, virion internalization through clathrin-dependent endocytosis and fusion with host membrane. Fusion with the host cell is most likely mediated by both E1 and E2, through conformational rearrangements of the heterodimer required for fusion rather than a classical class II fusion mechanism. The interaction between envelope glycoprotein E2 and host apolipoprotein E/APOE allows the proper assembly, maturation and infectivity of the viral particles. This interaction is probably promoted via the up-regulation of cellular autophagy by the virus. E1/E2 heterodimer binds host apolipoproteins such as APOB and APOE thereby forming a lipo-viro-particle (LVP). APOE associated to the LVP allows the initial virus attachment to cell surface receptors such as the heparan sulfate proteoglycans (HSPGs), syndecan-1 (SDC1), syndecan-1 (SDC2), the low-density lipoprotein receptor (LDLR) and scavenger receptor class B type I (SCARB1). The cholesterol transfer activity of SCARB1 allows E2 exposure and binding of E2 to SCARB1 and the tetraspanin CD81. E1/E2 heterodimer binding on CD81 activates the epithelial growth factor receptor (EGFR) signaling pathway. Diffusion of the complex E1-E2-EGFR-SCARB1-CD81 to the cell lateral membrane allows further interaction with Claudin 1 (CLDN1) and occludin (OCLN) to finally trigger HCV entry. Inhibits host EIF2AK2/PKR activation, preventing the establishment of an antiviral state. Viral ligand for CD209/DC-SIGN and CLEC4M/DC-SIGNR, which are respectively found on dendritic cells (DCs), and on liver sinusoidal endothelial cells and macrophage-like cells of lymph node sinuses. These interactions allow the capture of circulating HCV particles by these cells and subsequent facilitated transmission to permissive cells such as hepatocytes and lymphocyte subpopulations. The interaction between E2 and host amino acid transporter complex formed by SLC3A2 and SLC7A5/LAT1 may facilitate viral entry into host cell. Its function is as follows. Ion channel protein that acts as a viroporin and plays an essential role in the assembly, envelopment and secretion of viral particles. Regulates the host cell secretory pathway, which induces the intracellular retention of viral glycoproteins and favors assembly of viral particles. Creates a pore in acidic organelles and releases Ca(2+) and H(+) in the cytoplasm of infected cells, leading to a productive viral infection. High levels of cytoplasmic Ca(2+) may trigger membrane trafficking and transport of viral ER-associated proteins to viroplasms, sites of viral genome replication. This ionic imbalance induces the assembly of the inflammasome complex, which triggers the maturation of pro-IL-1beta into IL-1beta through the action of caspase-1. Targets also host mitochondria and induces mitochondrial depolarization. In addition of its role as a viroporin, acts as a lipid raft adhesion factor. Functionally, cysteine protease required for the proteolytic auto-cleavage between the non-structural proteins NS2 and NS3. The N-terminus of NS3 is required for the function of NS2 protease (active region NS2-3). Promotes the initiation of viral particle assembly by mediating the interaction between structural and non-structural proteins. In terms of biological role, displays three enzymatic activities: serine protease with a chymotrypsin-like fold, NTPase and RNA helicase. NS3 serine protease, in association with NS4A, is responsible for the cleavages of NS3-NS4A, NS4A-NS4B, NS4B-NS5A and NS5A-NS5B. The NS3/NS4A complex prevents phosphorylation of host IRF3, thus preventing the establishment of dsRNA induced antiviral state. The NS3/NS4A complex induces host amino acid transporter component SLC3A2, thus contributing to HCV propagation. NS3 RNA helicase binds to RNA and unwinds both dsDNA and dsRNA in the 3' to 5' direction, and likely resolves RNA complicated stable secondary structures in the template strand. Binds a single ATP and catalyzes the unzipping of a single base pair of dsRNA. Inhibits host antiviral proteins TBK1 and IRF3 thereby preventing the establishment of an antiviral state. Cleaves host MAVS/CARDIF thereby preventing the establishment of an antiviral state. Cleaves host TICAM1/TRIF, thereby disrupting TLR3 signaling and preventing the establishment of an antiviral state. Peptide cofactor which forms a non-covalent complex with the N-terminal of NS3 serine protease. The NS3/NS4A complex prevents phosphorylation of host IRF3, thus preventing the establishment of dsRNA induced antiviral state. The NS3/NS4A complex induces host amino acid transporter component SLC3A2, thus contributing to HCV propagation. Its function is as follows. Induces a specific membrane alteration that serves as a scaffold for the virus replication complex. This membrane alteration gives rise to the so-called ER-derived membranous web that contains the replication complex. NS4B self-interaction contributes to its function in membranous web formation. Promotes host TRIF protein degradation in a CASP8-dependent manner thereby inhibiting host TLR3-mediated interferon signaling. Disrupts the interaction between STING and TBK1 contributing to the inhibition of interferon signaling. Functionally, phosphorylated protein that is indispensable for viral replication and assembly. Both hypo- and hyperphosphorylated states are required for the viral life cycle. The hyperphosphorylated form of NS5A is an inhibitor of viral replication. Involved in RNA-binding and especially in binding to the viral genome. Zinc is essential for RNA-binding. Participates in the viral particle production as a result of its interaction with the mature viral core protein. Its interaction with host VAPB may target the viral replication complex to vesicles. Down-regulates viral IRES translation initiation. Mediates interferon resistance, presumably by interacting with and inhibiting host EIF2AK2/PKR. Prevents BIN1-induced apoptosis. Acts as a transcriptional activator of some host genes important for viral replication when localized in the nucleus. Via the interaction with host PACSIN2, modulates lipid droplet formation in order to promote virion assembly. Modulates TNFRSF21/DR6 signaling pathway for viral propagation. In terms of biological role, RNA-dependent RNA polymerase that performs primer-template recognition and RNA synthesis during viral replication. Initiates RNA transcription/replication at a flavin adenine dinucleotide (FAD), resulting in a 5'- FAD cap on viral RNAs. In this way, recognition of viral 5' RNA by host pattern recognition receptors can be bypassed, thereby evading activation of antiviral pathways. This chain is Genome polyprotein, found in Homo sapiens (Human).